Reading from the N-terminus, the 299-residue chain is MFNTNRVRIAMQKTGRLSSESIKLLTCCGIKINLKQQKLIAFAENMPIDVMLVRDDDIPGLVMDGVVDLGIVGENVLQEELLHRISQNLENSYITLRRLDFGICRLSLAIPINTPYVDITSLKNFRIATSYPHLLKKYLDSKNIVFKSCMLNGSVEVAPRAGLADAICDLVSTGATLEANGLREVQVVFRSHACLICKTGNINFAKKEVINKLMTRIKGVIKARESKYIMLHAPVNKLEEVISLLHGAEKPTILKLAGDDHRVAMHMVSSETLFWETMEKLKSLGASSILVLPIEKMME.

It belongs to the ATP phosphoribosyltransferase family. Long subfamily. As to quaternary structure, equilibrium between an active dimeric form, an inactive hexameric form and higher aggregates. Interconversion between the various forms is largely reversible and is influenced by the natural substrates and inhibitors of the enzyme. The cofactor is Mg(2+).

The protein resides in the cytoplasm. The enzyme catalyses 1-(5-phospho-beta-D-ribosyl)-ATP + diphosphate = 5-phospho-alpha-D-ribose 1-diphosphate + ATP. It functions in the pathway amino-acid biosynthesis; L-histidine biosynthesis; L-histidine from 5-phospho-alpha-D-ribose 1-diphosphate: step 1/9. Its activity is regulated as follows. Feedback inhibited by histidine. Its function is as follows. Catalyzes the condensation of ATP and 5-phosphoribose 1-diphosphate to form N'-(5'-phosphoribosyl)-ATP (PR-ATP). Has a crucial role in the pathway because the rate of histidine biosynthesis seems to be controlled primarily by regulation of HisG enzymatic activity. This is ATP phosphoribosyltransferase (hisG) from Buchnera aphidicola subsp. Schizaphis graminum (strain Sg).